Consider the following 625-residue polypeptide: ATP-binding cassette sub-family F member 2 (625 aa).

Residues methionine 1–glutamate 54 form a disordered region. Positions alanine 40–glutamate 54 are enriched in basic and acidic residues. ABC transporter domains follow at residues alanine 88–methionine 327 and isoleucine 398–glutamate 615. Residue glycine 120–serine 127 participates in ATP binding. Threonine 220 is subject to Phosphothreonine. Lysine 306 is subject to N6-acetyllysine. Glycine 432–serine 439 is an ATP binding site. Serine 514 is subject to Phosphoserine.

Belongs to the ABC transporter superfamily. ABCF family. EF3 subfamily.

This is ATP-binding cassette sub-family F member 2 (ABCF2) from Bos taurus (Bovine).